The following is a 556-amino-acid chain: Genetic interactor of prohibitins 3, mitochondrial (556 aa).

The transit peptide at Met-1–Lys-21 directs the protein to the mitochondrion. One can recognise a CP-type G domain in the interval Glu-113–Ser-305.

The protein belongs to the TRAFAC class YlqF/YawG GTPase family. GEP3 subfamily.

It localises to the mitochondrion. Interacts genetically with prohibitins and thus may be involved in the mitochondrial lipid metabolism. This is Genetic interactor of prohibitins 3, mitochondrial (GEP3) from Saccharomyces cerevisiae (strain ATCC 204508 / S288c) (Baker's yeast).